The following is a 329-amino-acid chain: GMP reductase (329 aa).

Cys178 (thioimidate intermediate) is an active-site residue. An NADP(+)-binding site is contributed by 207–230; it reads VIADGGIRTHGDIAKSIRMGATMV.

It belongs to the IMPDH/GMPR family. GuaC type 2 subfamily.

The enzyme catalyses IMP + NH4(+) + NADP(+) = GMP + NADPH + 2 H(+). Functionally, catalyzes the irreversible NADPH-dependent deamination of GMP to IMP. It functions in the conversion of nucleobase, nucleoside and nucleotide derivatives of G to A nucleotides, and in maintaining the intracellular balance of A and G nucleotides. The chain is GMP reductase from Lactococcus lactis subsp. cremoris (strain SK11).